The chain runs to 277 residues: Bifunctional protein FolD (277 aa).

Residues 164-166 (GRS), Ser-189, and Thr-230 each bind NADP(+).

Belongs to the tetrahydrofolate dehydrogenase/cyclohydrolase family. In terms of assembly, homodimer.

The enzyme catalyses (6R)-5,10-methylene-5,6,7,8-tetrahydrofolate + NADP(+) = (6R)-5,10-methenyltetrahydrofolate + NADPH. The catalysed reaction is (6R)-5,10-methenyltetrahydrofolate + H2O = (6R)-10-formyltetrahydrofolate + H(+). The protein operates within one-carbon metabolism; tetrahydrofolate interconversion. Catalyzes the oxidation of 5,10-methylenetetrahydrofolate to 5,10-methenyltetrahydrofolate and then the hydrolysis of 5,10-methenyltetrahydrofolate to 10-formyltetrahydrofolate. This Clostridium perfringens (strain ATCC 13124 / DSM 756 / JCM 1290 / NCIMB 6125 / NCTC 8237 / Type A) protein is Bifunctional protein FolD.